The primary structure comprises 146 residues: Ribosomal RNA large subunit methyltransferase H (146 aa).

S-adenosyl-L-methionine contacts are provided by residues Leu-60, Gly-93, and 112-117; that span reads MGKMTL.

The protein belongs to the RNA methyltransferase RlmH family. As to quaternary structure, homodimer.

The protein resides in the cytoplasm. It catalyses the reaction pseudouridine(1915) in 23S rRNA + S-adenosyl-L-methionine = N(3)-methylpseudouridine(1915) in 23S rRNA + S-adenosyl-L-homocysteine + H(+). Functionally, specifically methylates the pseudouridine at position 1915 (m3Psi1915) in 23S rRNA. The sequence is that of Ribosomal RNA large subunit methyltransferase H from Koribacter versatilis (strain Ellin345).